A 148-amino-acid chain; its full sequence is Deoxyuridine 5'-triphosphate nucleotidohydrolase (148 aa).

Substrate contacts are provided by residues 68-70, N81, 85-87, and K95; these read RSG and TID.

This sequence belongs to the dUTPase family. It depends on Mg(2+) as a cofactor.

It catalyses the reaction dUTP + H2O = dUMP + diphosphate + H(+). Its pathway is pyrimidine metabolism; dUMP biosynthesis; dUMP from dCTP (dUTP route): step 2/2. Functionally, this enzyme is involved in nucleotide metabolism: it produces dUMP, the immediate precursor of thymidine nucleotides and it decreases the intracellular concentration of dUTP so that uracil cannot be incorporated into DNA. This Rickettsia canadensis (strain McKiel) protein is Deoxyuridine 5'-triphosphate nucleotidohydrolase.